The primary structure comprises 355 residues: Chorismate synthase (355 aa).

NADP(+) is bound at residue Arg-46. FMN-binding positions include 123–125, 233–234, Gly-273, 288–292, and Arg-314; these read RAS, NG, and KPTPS.

The protein belongs to the chorismate synthase family. As to quaternary structure, homotetramer. FMNH2 serves as cofactor.

It carries out the reaction 5-O-(1-carboxyvinyl)-3-phosphoshikimate = chorismate + phosphate. It participates in metabolic intermediate biosynthesis; chorismate biosynthesis; chorismate from D-erythrose 4-phosphate and phosphoenolpyruvate: step 7/7. In terms of biological role, catalyzes the anti-1,4-elimination of the C-3 phosphate and the C-6 proR hydrogen from 5-enolpyruvylshikimate-3-phosphate (EPSP) to yield chorismate, which is the branch point compound that serves as the starting substrate for the three terminal pathways of aromatic amino acid biosynthesis. This reaction introduces a second double bond into the aromatic ring system. The chain is Chorismate synthase from Campylobacter concisus (strain 13826).